A 179-amino-acid chain; its full sequence is Large ribosomal subunit protein uL5 (179 aa).

This sequence belongs to the universal ribosomal protein uL5 family. Part of the 50S ribosomal subunit; part of the 5S rRNA/L5/L18/L25 subcomplex. Contacts the 5S rRNA and the P site tRNA. Forms a bridge to the 30S subunit in the 70S ribosome.

In terms of biological role, this is one of the proteins that bind and probably mediate the attachment of the 5S RNA into the large ribosomal subunit, where it forms part of the central protuberance. In the 70S ribosome it contacts protein S13 of the 30S subunit (bridge B1b), connecting the 2 subunits; this bridge is implicated in subunit movement. Contacts the P site tRNA; the 5S rRNA and some of its associated proteins might help stabilize positioning of ribosome-bound tRNAs. The chain is Large ribosomal subunit protein uL5 from Thermoanaerobacter sp. (strain X514).